Reading from the N-terminus, the 428-residue chain is Enolase 1 (428 aa).

Residue glutamine 167 coordinates (2R)-2-phosphoglycerate. The active-site Proton donor is glutamate 209. Aspartate 246, glutamate 288, and aspartate 315 together coordinate Mg(2+). Residues lysine 340, arginine 369, serine 370, and lysine 391 each contribute to the (2R)-2-phosphoglycerate site. Catalysis depends on lysine 340, which acts as the Proton acceptor.

It belongs to the enolase family. In terms of assembly, component of the RNA degradosome, a multiprotein complex involved in RNA processing and mRNA degradation. The cofactor is Mg(2+).

The protein resides in the cytoplasm. Its subcellular location is the secreted. The protein localises to the cell surface. The catalysed reaction is (2R)-2-phosphoglycerate = phosphoenolpyruvate + H2O. It participates in carbohydrate degradation; glycolysis; pyruvate from D-glyceraldehyde 3-phosphate: step 4/5. Catalyzes the reversible conversion of 2-phosphoglycerate (2-PG) into phosphoenolpyruvate (PEP). It is essential for the degradation of carbohydrates via glycolysis. This is Enolase 1 from Pseudomonas syringae pv. syringae (strain B728a).